A 132-amino-acid polypeptide reads, in one-letter code: Small ribosomal subunit protein uS8 (132 aa).

Belongs to the universal ribosomal protein uS8 family. As to quaternary structure, part of the 30S ribosomal subunit. Contacts proteins S5 and S12.

One of the primary rRNA binding proteins, it binds directly to 16S rRNA central domain where it helps coordinate assembly of the platform of the 30S subunit. This is Small ribosomal subunit protein uS8 from Roseiflexus castenholzii (strain DSM 13941 / HLO8).